The primary structure comprises 552 residues: Chaperonin GroEL (552 aa).

ATP-binding positions include 30–33 (TLGP), Lys-51, 87–91 (DGTTT), Gly-415, 479–481 (NAA), and Asp-495.

Belongs to the chaperonin (HSP60) family. Forms a cylinder of 14 subunits composed of two heptameric rings stacked back-to-back. Interacts with the co-chaperonin GroES.

Its subcellular location is the cytoplasm. It carries out the reaction ATP + H2O + a folded polypeptide = ADP + phosphate + an unfolded polypeptide.. In terms of biological role, together with its co-chaperonin GroES, plays an essential role in assisting protein folding. The GroEL-GroES system forms a nano-cage that allows encapsulation of the non-native substrate proteins and provides a physical environment optimized to promote and accelerate protein folding. This is Chaperonin GroEL from Stutzerimonas stutzeri (Pseudomonas stutzeri).